Consider the following 452-residue polypeptide: MAGQMSKFRRPEQLDLLPYIAKWLALAGLVALLAGSASALFLLSLDHATQWRETHPWVIWLLPVAGFAVGLAYHLIGKPVDAGNNLIIDEIHDPKKIVPLRMVPMVLIGTVVSHLFGASVGREGTAVQMGGALADQLTHVFRLRREDRRVILMAGISAGFASVFGTPLAGALFGLEVLAIGRMRYDALFPCVVAAIVADQVGQAWGVVHTHYVIGEVVPVQLWSVMAVVAAGIVFGLTGLLFATATHKLGAFVKRLITYSPLRPFAGGLLIAVAVWALGSNHYIDVDKYIGLGIPSIVQSFQMPMAPWDWLGKMVFTVVSLGTGFKGGEVTPLFYIGATLGNALAPLLHLPFGMLAGIGFVAVFAGAANTPLATIVMAMELFGPEIAPLAAIACIASYLVSGHTGIYHAQRVGHSKHHRPLPEEIRLSDIKQFHAQSESASERKVTLAGEEK.

Helical transmembrane passes span 23–43, 57–77, 97–117, 160–180, 188–208, 222–242, 264–284, 315–337, 344–364, and 386–408; these read WLAL…LFLL, WVIW…HLIG, IVPL…HLFG, FASV…VLAI, LFPC…WGVV, LWSV…GLLF, PFAG…NHYI, VFTV…FYIG, LAPL…VAVF, and IAPL…GIYH.

It belongs to the chloride channel (TC 2.A.49) family.

It is found in the cell membrane. Transports chloride and fluoride with similar efficiency. This Pseudomonas syringae pv. tomato (strain ATCC BAA-871 / DC3000) protein is Chloride/fluoride channel protein (eriC).